The primary structure comprises 431 residues: Protein translocase subunit SecY 1 (431 aa).

The next 10 membrane-spanning stretches (helical) occupy residues 18 to 38 (IYFT…TVPG), 67 to 87 (YSIF…IQLL), 115 to 135 (YLTL…FNAL), 150 to 170 (VEIA…GDEI), 178 to 198 (GVSV…LYQI), 215 to 235 (ILFF…VTWV), 268 to 288 (VIPV…LMAF), 312 to 332 (GVII…FVQV), 365 to 385 (LIKL…LPQL), and 392 to 412 (LPSS…VVLE).

The protein belongs to the SecY/SEC61-alpha family. Component of the Sec protein translocase complex. Heterotrimer consisting of SecY, SecE and SecG subunits. The heterotrimers can form oligomers, although 1 heterotrimer is thought to be able to translocate proteins. Interacts with the ribosome. Interacts with SecDF, and other proteins may be involved. Interacts with SecA.

It is found in the cell membrane. In terms of biological role, the central subunit of the protein translocation channel SecYEG. Consists of two halves formed by TMs 1-5 and 6-10. These two domains form a lateral gate at the front which open onto the bilayer between TMs 2 and 7, and are clamped together by SecE at the back. The channel is closed by both a pore ring composed of hydrophobic SecY resides and a short helix (helix 2A) on the extracellular side of the membrane which forms a plug. The plug probably moves laterally to allow the channel to open. The ring and the pore may move independently. This chain is Protein translocase subunit SecY 1, found in Lactobacillus kefiranofaciens subsp. kefiranofaciens.